Consider the following 128-residue polypeptide: Leucine-rich single-pass membrane protein 1 (128 aa).

Ser24 is modified (phosphoserine). The chain crosses the membrane as a helical span at residues 66-86; that stretch reads GLLLVLTVSLALVFFAIFLII. Residues 90-111 adopt a coiled-coil conformation; sequence NQMEDVSRRLTAEGKDIDDLKK.

It is found in the membrane. This is Leucine-rich single-pass membrane protein 1 (Lsmem1) from Mus musculus (Mouse).